A 303-amino-acid polypeptide reads, in one-letter code: DnaJ homolog subfamily C member 17 (303 aa).

Residues Asp11 to Arg76 form the J domain. Composition is skewed to basic and acidic residues over residues Ala78–Gln106 and Ile150–Glu166. Disordered stretches follow at residues Ala78 to Leu124 and Ile150 to Thr170. The region spanning Lys178 to Gly249 is the RRM domain. Lys264 carries the N6-methyllysine modification.

The protein resides in the cytoplasm. Its subcellular location is the nucleus. Its function is as follows. May negatively affect PAX8-induced thyroglobulin/TG transcription. The protein is DnaJ homolog subfamily C member 17 (Dnajc17) of Rattus norvegicus (Rat).